Reading from the N-terminus, the 326-residue chain is tRNA uridine(34) hydroxylase (326 aa).

The Rhodanese domain maps to 123-217 (SDPEVLLIDT…YLEEVKPEES (95 aa)). Residue Cys-177 is the Cysteine persulfide intermediate of the active site. The tract at residues 293–326 (KSRGESHIGSDVKQVIEARRQDKVERKQRQHQEG) is disordered.

This sequence belongs to the TrhO family.

It catalyses the reaction uridine(34) in tRNA + AH2 + O2 = 5-hydroxyuridine(34) in tRNA + A + H2O. Catalyzes oxygen-dependent 5-hydroxyuridine (ho5U) modification at position 34 in tRNAs. The chain is tRNA uridine(34) hydroxylase from Shewanella loihica (strain ATCC BAA-1088 / PV-4).